A 3258-amino-acid polypeptide reads, in one-letter code: Protein unc-80 homolog (3258 aa).

The disordered stretch occupies residues 152 to 173; the sequence is VENQGSPGQPCQSSSNDEEENN. Residues 155 to 166 show a composition bias toward low complexity; that stretch reads QGSPGQPCQSSS. Phosphoserine is present on serine 257. Disordered stretches follow at residues 291-316, 449-468, 522-560, 697-717, 732-784, 963-1019, 1034-1076, 1404-1447, and 1817-1836; these read RGNS…RASL, RKED…GKRR, RRGS…HGEN, KKSE…GAFQ, PAVS…TPVS, PGKK…EQMQ, KSQS…ISLR, EDSK…MSNA, and AVSA…HHVP. The segment covering 295–307 has biased composition (polar residues); that stretch reads FDGSLSSQTSQER. At serine 525 the chain carries Phosphoserine. Positions 698–712 are enriched in basic and acidic residues; it reads KSENKENETLEKRPS. Residues 732-767 are compositionally biased toward gly residues; it reads PAVSGAGDGGGEEGGGGDGGGGGGDGGGGGGGGGGP. Basic and acidic residues-rich tracts occupy residues 769 to 780 and 965 to 974; these read EKNDKNQEKDES and KKVEENEQES. Residues 1035–1052 are compositionally biased toward low complexity; that stretch reads SQSAASDTSSQSEQDTSE. Basic residues predominate over residues 1066–1076; sequence ARSRSRRISLR. The segment covering 1417 to 1429 has biased composition (basic and acidic residues); that stretch reads LKSDAGVEEKKEG. The next 4 helical transmembrane spans lie at 2268 to 2288, 2398 to 2418, 2785 to 2805, and 2831 to 2851; these read PFVL…DAAN, IAAT…VEVL, GLAE…LVCF, and LALW…FVLL. The segment covering 2942 to 2964 has biased composition (polar residues); the sequence is NTGTGTVWEQDSEPSQQASQDTL. The segment at 2942–2982 is disordered; the sequence is NTGTGTVWEQDSEPSQQASQDTLSRTDEEDEENDSISMPSV. Residue serine 3042 is modified to Phosphoserine. The interval 3051-3213 is disordered; sequence NLLVQQPLGR…DDFTGLETSS (163 aa). Residues 3059–3068 show a composition bias toward basic residues; that stretch reads GRKRGLRQLR. Over residues 3088–3100 the composition is skewed to polar residues; that stretch reads RLSTTRRSIQPKT. Residues 3117–3129 show a composition bias toward low complexity; it reads PEPAAAPTDALPA. Residues 3175–3186 show a composition bias toward acidic residues; that stretch reads PTEEGEKEEDTE.

The protein belongs to the unc-80 family. As to quaternary structure, NALCN complex consists of NALCN and auxiliary subunits, UNC79, UNC80 and NACL1. These auxiliary subunits are essential for the NALCN complex function. Interacts (via N-terminus half) with NALCN; this interaction facilitates NALCN surface localization. Interacts with UNC79. UNC80 bridges NALCN to UNC79. Post-translationally, phosphorylated on tyrosine residues. Moderately expressed in fetal brain, spinal cord, skeletal muscle, thymus, spleen, fetal liver, small intestine, colon, kidney and uterus. Highly expressed in adrenal gland, prostate and testis, as well as in brain and cerebellum.

The protein localises to the cell membrane. In terms of biological role, auxiliary subunit of the NALCN sodium channel complex, a voltage-gated ion channel responsible for the resting Na(+) permeability that controls neuronal excitability. Activated by neuropeptides substance P, neurotensin, and extracellular Ca(2+) that regulates neuronal excitability by controlling the sizes of NALCN-dependent sodium-leak current. UNC80 is essential for NALCN sensitivity to extracellular Ca(2+). The chain is Protein unc-80 homolog from Homo sapiens (Human).